A 61-amino-acid chain; its full sequence is Small ribosomal subunit protein uS14 (61 aa).

The Zn(2+) site is built by Cys24, Cys27, Cys40, and Cys43.

This sequence belongs to the universal ribosomal protein uS14 family. Zinc-binding uS14 subfamily. As to quaternary structure, part of the 30S ribosomal subunit. Contacts proteins S3 and S10. The cofactor is Zn(2+).

Its function is as follows. Binds 16S rRNA, required for the assembly of 30S particles and may also be responsible for determining the conformation of the 16S rRNA at the A site. This Acidothermus cellulolyticus (strain ATCC 43068 / DSM 8971 / 11B) protein is Small ribosomal subunit protein uS14.